The following is a 590-amino-acid chain: Aspartate--tRNA ligase (590 aa).

E174 is a binding site for L-aspartate. The aspartate stretch occupies residues 198–201 (QLMK). R220 is a binding site for L-aspartate. Residues 220-222 (RDE) and Q229 contribute to the ATP site. An L-aspartate-binding site is contributed by H443. Residue E484 coordinates ATP. R491 contacts L-aspartate. 536 to 539 (GLDR) contacts ATP.

It belongs to the class-II aminoacyl-tRNA synthetase family. Type 1 subfamily. In terms of assembly, homodimer.

The protein localises to the cytoplasm. The enzyme catalyses tRNA(Asp) + L-aspartate + ATP = L-aspartyl-tRNA(Asp) + AMP + diphosphate. Its function is as follows. Catalyzes the attachment of L-aspartate to tRNA(Asp) in a two-step reaction: L-aspartate is first activated by ATP to form Asp-AMP and then transferred to the acceptor end of tRNA(Asp). The chain is Aspartate--tRNA ligase from Lactococcus lactis subsp. cremoris (strain SK11).